The chain runs to 268 residues: Large ribosomal subunit protein bL9m (268 aa).

Residues 1 to 52 (MAAAAFAVPRGVQLRVLTERLLRGGVRELLRPRLSGSTPGSERDFSLSHSRG) constitute a mitochondrion transit peptide.

This sequence belongs to the bacterial ribosomal protein bL9 family. In terms of assembly, component of the mitochondrial ribosome large subunit (39S) which comprises a 16S rRNA and about 50 distinct proteins.

Its subcellular location is the mitochondrion. This is Large ribosomal subunit protein bL9m (MRPL9) from Bos taurus (Bovine).